The primary structure comprises 2476 residues: Non-reducing polyketide synthase ausA (2476 aa).

The tract at residues 14 to 253 is N-terminal acylcarrier protein transacylase domain (SAT); that stretch reads VLFGPKYPEV…HHSNHTQAVE (240 aa). In terms of domain architecture, Ketosynthase family 3 (KS3) spans 379-795; sequence AVPIAVTGMA…GSNAAIVLRE (417 aa). Active-site for beta-ketoacyl synthase activity residues include Cys-544, His-679, and His-718. A malonyl-CoA:ACP transacylase (MAT) domain region spans residues 906–1210; sequence ICFGGQTGDT…LPTDLSGAQA (305 aa). Ser-993 functions as the For acyl/malonyl transferase activity in the catalytic mechanism. The tract at residues 1277-1405 is N-terminal hotdog fold; it reads QEASLVRLLR…GRVSLQAAGS (129 aa). A PKS/mFAS DH domain is found at 1277–1584; the sequence is QEASLVRLLR…FTGVSIQSLK (308 aa). The product template (PT) domain stretch occupies residues 1280–1583; it reads SLVRLLRQDG…TFTGVSIQSL (304 aa). His-1310 functions as the Proton acceptor; for dehydratase activity in the catalytic mechanism. Residues 1433 to 1584 form a C-terminal hotdog fold region; the sequence is SSSGLKRSTV…FTGVSIQSLK (152 aa). Asp-1491 serves as the catalytic Proton donor; for dehydratase activity. The Carrier domain occupies 1626–1700; it reads DGDLLAVQTM…GLVQRIFPGH (75 aa). At Ser-1660 the chain carries O-(pantetheine 4'-phosphoryl)serine. The interval 1862-2095 is methyltransferase (CMeT) domain; sequence QHASEHKLLH…GFNWVDWTDN (234 aa). The thioesterase (TE) domain stretch occupies residues 2128–2476; it reads NTVQEQTVLY…YEFLRRHVGL (349 aa). Catalysis depends on for thioesterase activity residues Ser-2251, Asp-2413, and His-2445.

It catalyses the reaction 3 malonyl-CoA + acetyl-CoA + 2 S-adenosyl-L-methionine = 3,5-dimethylorsellinate + 2 S-adenosyl-L-homocysteine + 3 CO2 + 4 CoA. Its pathway is secondary metabolite biosynthesis; terpenoid biosynthesis. Functionally, non-reducing polyketide synthase; part of the gene cluster A that mediates the biosynthesis of austinol and dehydroaustinol, two fungal meroterpenoids. The first step of the pathway is the synthesis of 3,5-dimethylorsellinic acid by the polyketide synthase ausA. 3,5-dimethylorsellinic acid is then prenylated by the polyprenyl transferase ausN. Further epoxidation by the FAD-dependent monooxygenase ausM and cyclization by the probable terpene cyclase ausL lead to the formation of protoaustinoid A. Protoaustinoid A is then oxidized to spiro-lactone preaustinoid A3 by the combined action of the FAD-binding monooxygenases ausB and ausC, and the dioxygenase ausE. Acid-catalyzed keto-rearrangement and ring contraction of the tetraketide portion of preaustinoid A3 by ausJ lead to the formation of preaustinoid A4. The aldo-keto reductase ausK, with the help of ausH, is involved in the next step by transforming preaustinoid A4 into isoaustinone which is in turn hydroxylated by the P450 monooxygenase ausI to form austinolide. Finally, the cytochrome P450 monooxygenase ausG modifies austinolide to austinol. Austinol can be further modified to dehydroaustinol which forms a diffusible complex with diorcinol that initiates conidiation. Due to genetic rearrangements of the clusters and the subsequent loss of some enzymes, the end products of the Emericella nidulans austinoid biosynthesis clusters are austinol and dehydroaustinol, even if additional enzymes, such as the O-acetyltransferase ausQ and the cytochrome P450 monooxygenase ausR are still functional. The polypeptide is Non-reducing polyketide synthase ausA (Emericella nidulans (strain FGSC A4 / ATCC 38163 / CBS 112.46 / NRRL 194 / M139) (Aspergillus nidulans)).